We begin with the raw amino-acid sequence, 382 residues long: Intermediate transcription factor 3 large subunit (382 aa).

It belongs to the orthopoxvirus OPG150 family. In terms of assembly, heterodimerizes with protein A8 to form the virus intermediate transcription factor (VITF)-3.

In terms of biological role, acts with RNA polymerase to initiate transcription from intermediate gene promoters. In Cynomys gunnisoni (Gunnison's prairie dog), this protein is Intermediate transcription factor 3 large subunit (OPG150).